The primary structure comprises 281 residues: Large ribosomal subunit protein uL2 (281 aa).

The interval 215–281 (LGRRPHTRGV…RRNNRKDSKK (67 aa)) is disordered. The span at 258 to 269 (KTRDNKSTDKFI) shows a compositional bias: basic and acidic residues. Positions 270–281 (VRRRNNRKDSKK) are enriched in basic residues.

This sequence belongs to the universal ribosomal protein uL2 family. Part of the 50S ribosomal subunit. Forms a bridge to the 30S subunit in the 70S ribosome.

In terms of biological role, one of the primary rRNA binding proteins. Required for association of the 30S and 50S subunits to form the 70S ribosome, for tRNA binding and peptide bond formation. It has been suggested to have peptidyltransferase activity; this is somewhat controversial. Makes several contacts with the 16S rRNA in the 70S ribosome. The chain is Large ribosomal subunit protein uL2 from Pelagibacter ubique (strain HTCC1062).